Reading from the N-terminus, the 249-residue chain is Putative [LysW]-aminoadipate/[LysW]-glutamate kinase (249 aa).

2 residues coordinate substrate: Arg-63 and Asn-166.

Belongs to the acetylglutamate kinase family. LysZ subfamily.

It localises to the cytoplasm. The enzyme catalyses [amino-group carrier protein]-C-terminal-N-(1,4-dicarboxybutan-1-yl)-L-glutamine + ATP = [amino-group carrier protein]-C-terminal-N-(1-carboxy-5-phosphooxy-5-oxopentan-1-yl)-L-glutamine + ADP. It catalyses the reaction [amino-group carrier protein]-C-terminal-gamma-(L-glutamyl)-L-glutamate + ATP = [amino-group carrier protein]-C-terminal-gamma-(5-phospho-L-glutamyl)-L-glutamate + ADP. The protein operates within amino-acid biosynthesis; L-lysine biosynthesis via AAA pathway; L-lysine from L-alpha-aminoadipate (Thermus route): step 2/5. It participates in amino-acid biosynthesis; L-arginine biosynthesis. In terms of biological role, involved in both the arginine and lysine biosynthetic pathways. Phosphorylates the LysW-bound precursors glutamate (for arginine biosynthesis), respectively alpha-aminoadipate (for lysine biosynthesis). This is Putative [LysW]-aminoadipate/[LysW]-glutamate kinase from Pyrococcus furiosus (strain ATCC 43587 / DSM 3638 / JCM 8422 / Vc1).